The primary structure comprises 363 residues: Anhydro-N-acetylmuramic acid kinase (363 aa).

10–17 (GTSLDGMD) lines the ATP pocket.

It belongs to the anhydro-N-acetylmuramic acid kinase family.

It catalyses the reaction 1,6-anhydro-N-acetyl-beta-muramate + ATP + H2O = N-acetyl-D-muramate 6-phosphate + ADP + H(+). Its pathway is amino-sugar metabolism; 1,6-anhydro-N-acetylmuramate degradation. It participates in cell wall biogenesis; peptidoglycan recycling. Functionally, catalyzes the specific phosphorylation of 1,6-anhydro-N-acetylmuramic acid (anhMurNAc) with the simultaneous cleavage of the 1,6-anhydro ring, generating MurNAc-6-P. Is required for the utilization of anhMurNAc either imported from the medium or derived from its own cell wall murein, and thus plays a role in cell wall recycling. Contributes to intrinsic fosfomycin resistance in P.aeruginosa. The chain is Anhydro-N-acetylmuramic acid kinase from Pseudomonas aeruginosa (strain ATCC 15692 / DSM 22644 / CIP 104116 / JCM 14847 / LMG 12228 / 1C / PRS 101 / PAO1).